A 473-amino-acid polypeptide reads, in one-letter code: Venom prothrombin activator vestarin-D1 (473 aa).

The N-terminal stretch at 1–20 (MAPQLLLCLIQTFLWSLPEA) is a signal peptide. A propeptide spanning residues 21-40 (ESNVFLKSNVANRFLQRTKR) is cleaved from the precursor. The region spanning 41–86 (ANSGFEEIYPANFERECVEERCSKEEAREVFEDDEKTEAFWTVYVD) is the Gla domain. 4-carboxyglutamate occurs at positions 46, 47, 54, 56, 59, 60, 65, 66, 69, 72, and 75. A disulfide bridge links Cys57 with Cys62. The 37-residue stretch at 86–122 (DGDQCLSNPCHYGGTCKDGIGSYTCTCLAGYEGKNCE) folds into the EGF-like 1; calcium-binding domain. Cystine bridges form between Cys90-Cys101, Cys95-Cys110, Cys112-Cys121, Cys129-Cys140, Cys136-Cys149, Cys151-Cys164, Cys172-Cys335, Cys235-Cys240, Cys383-Cys397, and Cys408-Cys436. O-linked (Hex...) serine glycosylation occurs at Ser92. In terms of domain architecture, EGF-like 2 spans 129–164 (CRVDNGNCWHFCKPVQNDTQCSCAEGYRLGDNGFSC). A propeptide spans 182 to 228 (REASLPDFQTDFSDDYDAIDENNLIETVQSQSATLLKKSDNPNPDIR) (activation peptide). The Peptidase S1 domain maps to 229 to 460 (IVNGLDCKLG…FLPWIKTIMR (232 aa)). The active-site Charge relay system is His270. Asn273 is a glycosylation site (N-linked (GlcNAc...) asparagine). Asp315 functions as the Charge relay system in the catalytic mechanism. Catalysis depends on Ser412, which acts as the Charge relay system.

This sequence belongs to the peptidase S1 family. Snake venom subfamily. In terms of assembly, heterodimer of a light chain and a heavy chain; disulfide-linked. The vitamin K-dependent, enzymatic carboxylation of some glutamate residues allows the modified protein to bind calcium. In terms of tissue distribution, expressed by the venom gland.

It is found in the secreted. It carries out the reaction Selective cleavage of Arg-|-Thr and then Arg-|-Ile bonds in prothrombin to form thrombin.. In terms of biological role, snake prothrombin activator that attacks the hemostatic system of prey. This protein is functionally similar to blood coagulation factor Xa. The sequence is that of Venom prothrombin activator vestarin-D1 from Demansia vestigiata (Lesser black whip snake).